The primary structure comprises 201 residues: Probable GTP-binding protein EngB (201 aa).

Positions 21-191 (AAPQIILAGR…WNLLDVTAIP (171 aa)) constitute an EngB-type G domain. GTP-binding positions include 29–36 (GRSNVGKS), 56–60 (GKTRS), 75–78 (DLPG), 142–145 (TKSD), and 168–172 (ICVSS). 2 residues coordinate Mg(2+): S36 and T58.

Belongs to the TRAFAC class TrmE-Era-EngA-EngB-Septin-like GTPase superfamily. EngB GTPase family. Requires Mg(2+) as cofactor.

Functionally, necessary for normal cell division and for the maintenance of normal septation. This is Probable GTP-binding protein EngB from Maridesulfovibrio salexigens (strain ATCC 14822 / DSM 2638 / NCIMB 8403 / VKM B-1763) (Desulfovibrio salexigens).